A 227-amino-acid polypeptide reads, in one-letter code: uncharacterized protein (227 aa).

A signal peptide spans 1 to 23 (MKKLTVTFLTFISIFFAATAAFA).

This is an uncharacterized protein from Coxiella burnetii (strain RSA 493 / Nine Mile phase I).